The primary structure comprises 312 residues: Lichenase-2 (312 aa).

The signal sequence occupies residues 1 to 6 (PPSVES). The Proton donor role is filled by Glu-99. N-linked (GlcNAc...) asparagine glycosylation is present at Asn-196. Glu-238 functions as the Nucleophile in the catalytic mechanism.

This sequence belongs to the glycosyl hydrolase 17 family.

It carries out the reaction Hydrolysis of (1-&gt;4)-beta-D-glucosidic linkages in beta-D-glucans containing (1-&gt;3)- and (1-&gt;4)-bonds.. Its pathway is glycan metabolism; beta-D-glucan degradation. Functionally, functions in plant cell wall hydrolysis during mobilization of the endosperm in germinating grain or during the growth of vegetative tissues. In Hordeum vulgare (Barley), this protein is Lichenase-2.